The primary structure comprises 161 residues: Large ribosomal subunit protein uL10 (161 aa).

The protein belongs to the universal ribosomal protein uL10 family. Part of the ribosomal stalk of the 50S ribosomal subunit. The N-terminus interacts with L11 and the large rRNA to form the base of the stalk. The C-terminus forms an elongated spine to which L12 dimers bind in a sequential fashion forming a multimeric L10(L12)X complex.

Its function is as follows. Forms part of the ribosomal stalk, playing a central role in the interaction of the ribosome with GTP-bound translation factors. In Wigglesworthia glossinidia brevipalpis, this protein is Large ribosomal subunit protein uL10 (rplJ).